We begin with the raw amino-acid sequence, 249 residues long: Adenosylcobinamide-GDP ribazoletransferase (249 aa).

7 helical membrane-spanning segments follow: residues 29–49, 50–70, 104–124, 131–151, 165–185, 194–214, and 226–246; these read LYWF…CAWL, PLSI…GFIV, VGSF…VAIL, AFAL…LLAA, GFVG…SLMM, PFLL…IGFL, and VLGA…GVAF.

This sequence belongs to the CobS family. The cofactor is Mg(2+).

It localises to the cell inner membrane. It catalyses the reaction alpha-ribazole + adenosylcob(III)inamide-GDP = adenosylcob(III)alamin + GMP + H(+). The catalysed reaction is alpha-ribazole 5'-phosphate + adenosylcob(III)inamide-GDP = adenosylcob(III)alamin 5'-phosphate + GMP + H(+). It functions in the pathway cofactor biosynthesis; adenosylcobalamin biosynthesis; adenosylcobalamin from cob(II)yrinate a,c-diamide: step 7/7. In terms of biological role, joins adenosylcobinamide-GDP and alpha-ribazole to generate adenosylcobalamin (Ado-cobalamin). Also synthesizes adenosylcobalamin 5'-phosphate from adenosylcobinamide-GDP and alpha-ribazole 5'-phosphate. This chain is Adenosylcobinamide-GDP ribazoletransferase, found in Chlorobium phaeovibrioides (strain DSM 265 / 1930) (Prosthecochloris vibrioformis (strain DSM 265)).